The sequence spans 329 residues: Porphobilinogen deaminase (329 aa).

Cys-253 carries the S-(dipyrrolylmethanemethyl)cysteine modification.

Belongs to the HMBS family. Monomer. Requires dipyrromethane as cofactor.

It carries out the reaction 4 porphobilinogen + H2O = hydroxymethylbilane + 4 NH4(+). Its function is as follows. Tetrapolymerization of the monopyrrole PBG into the hydroxymethylbilane pre-uroporphyrinogen in several discrete steps. The protein is Porphobilinogen deaminase of Leifsonia xyli subsp. xyli (strain CTCB07).